The sequence spans 359 residues: Protein mab-21-like 2-A (359 aa).

Belongs to the mab-21 family.

Its subcellular location is the nucleus. It localises to the cytoplasm. Functionally, required for normal development of the eye. May promote dorsalization of the developing embryo by antagonizing the ventralizing factor bmp4. Functional antagonism of bmp4 may require interaction with smad1. Required for gastrulation and subsequent neural development. May function as a transcriptional repressor. The chain is Protein mab-21-like 2-A (mab21l2-a) from Xenopus laevis (African clawed frog).